The chain runs to 297 residues: Glycine--tRNA ligase alpha subunit (297 aa).

The protein belongs to the class-II aminoacyl-tRNA synthetase family. As to quaternary structure, tetramer of two alpha and two beta subunits.

The protein resides in the cytoplasm. The catalysed reaction is tRNA(Gly) + glycine + ATP = glycyl-tRNA(Gly) + AMP + diphosphate. The protein is Glycine--tRNA ligase alpha subunit of Sulfurihydrogenibium sp. (strain YO3AOP1).